A 722-amino-acid polypeptide reads, in one-letter code: Glycine--tRNA ligase beta subunit (722 aa).

The protein belongs to the class-II aminoacyl-tRNA synthetase family. As to quaternary structure, tetramer of two alpha and two beta subunits.

The protein localises to the cytoplasm. It carries out the reaction tRNA(Gly) + glycine + ATP = glycyl-tRNA(Gly) + AMP + diphosphate. The chain is Glycine--tRNA ligase beta subunit from Xylella fastidiosa (strain M12).